Consider the following 208-residue polypeptide: Small ribosomal subunit protein uS4 (208 aa).

Residues 98-161 (RRLDNVIYRL…RKIPVLAEAQ (64 aa)) form the S4 RNA-binding domain.

The protein belongs to the universal ribosomal protein uS4 family. As to quaternary structure, part of the 30S ribosomal subunit. Contacts protein S5. The interaction surface between S4 and S5 is involved in control of translational fidelity.

In terms of biological role, one of the primary rRNA binding proteins, it binds directly to 16S rRNA where it nucleates assembly of the body of the 30S subunit. Functionally, with S5 and S12 plays an important role in translational accuracy. This Nitratidesulfovibrio vulgaris (strain ATCC 29579 / DSM 644 / CCUG 34227 / NCIMB 8303 / VKM B-1760 / Hildenborough) (Desulfovibrio vulgaris) protein is Small ribosomal subunit protein uS4.